A 621-amino-acid chain; its full sequence is KIF-binding protein (621 aa).

Serine 178 bears the Phosphoserine mark.

This sequence belongs to the KIF-binding protein family. Interacts with KIF1B; positively regulates KIF1B microtubule motor activity. Interacts with STMN2.

The protein resides in the cytoplasm. The protein localises to the cytoskeleton. Functionally, activator of KIF1B plus-end-directed microtubule motor activity. Required for organization of axonal microtubules, and axonal outgrowth and maintenance during peripheral and central nervous system development. This Bos taurus (Bovine) protein is KIF-binding protein (KIFBP).